The following is a 1696-amino-acid chain: PH domain leucine-rich repeat protein phosphatase 1 (1696 aa).

Met1 carries the post-translational modification N-acetylmethionine. Disordered stretches follow at residues 1 to 97 and 222 to 398; these read MEPA…GGGA and LGHG…VVGE. Positions 79-92 are enriched in low complexity; that stretch reads VPQPAAGGAAPVTA. Residues 313-325 are compositionally biased toward polar residues; it reads DTESFSLSPSAES. Ser378 carries the post-translational modification Phosphoserine. The PH domain occupies 499 to 599; the sequence is RIQLSGMYNV…WLRQVSKVAS (101 aa). LRR repeat units lie at residues 601–622, 624–645, 655–676, 678–699, 701–722, 724–746, 836–857, 858–879, 881–902, 904–925, 926–947, 950–971, 976–996, 1000–1021, 1024–1045, 1047–1068, 1069–1090, and 1092–1113; these read RISS…LFYS, DLTH…PAAR, KLKS…VCSI, TLAE…VGAM, NLQT…LENM, QLSY…EKLT, FLKA…PVPN, YLSY…VCES, KLEV…LFCN, SLRK…LERT, SVEV…LLMK, SLRF…TLSE, ILQE…PLLT, RLKI…KMAK, ELEE…IMNC, RMHT…MQLP, EVKC…ENLP, and KLQE…SLEL. The PPM-type phosphatase domain maps to 1138–1385; the sequence is SHGYTEASGV…DSISAVVVQL (248 aa). Residues Asp1173, Gly1174, Lys1337, and Asp1376 each coordinate Mn(2+). Disordered stretches follow at residues 1422–1473 and 1610–1696; these read RPSD…SPAY and KPGG…DTPL. Composition is skewed to low complexity over residues 1431-1452, 1647-1660, and 1670-1680; these read SSSS…MSSE, QQQQ…QQQQ, and QAQAQAQAQAQ. A PDZ-binding motif is present at residues 1694–1696; the sequence is TPL.

As to quaternary structure, interacts with the nucleotide free form of K-Ras (KRAS) via its LRR repeats. Interacts with AKT2, AKT3 and PRKCB isoform beta-II. Interacts with WDR48 and USP12. The cofactor is Mn(2+). As to expression, mainly present in brain (at protein level). Isoform 2 is more abundant in adult brain neurons than isoform 1 in. Isoforms 1 and 2 are expressed in the retina but not found in rod outer segments.

The protein resides in the cytoplasm. It is found in the membrane. Its subcellular location is the cell membrane. It localises to the nucleus. The protein localises to the nucleoplasm. The protein resides in the nucleus membrane. It catalyses the reaction O-phospho-L-seryl-[protein] + H2O = L-seryl-[protein] + phosphate. It carries out the reaction O-phospho-L-threonyl-[protein] + H2O = L-threonyl-[protein] + phosphate. With respect to regulation, insensitive to okadaic acid. Deubiquitination by WDR48-USP12 complex positively regulates PHLPP1 stability. Its function is as follows. Protein phosphatase involved in regulation of Akt and PKC signaling. Mediates dephosphorylation in the C-terminal domain hydrophobic motif of members of the AGC Ser/Thr protein kinase family; specifically acts on 'Ser-473' of AKT2 and AKT3, 'Ser-660' of PRKCB and 'Ser-657' of PRKCA. Isoform 2 seems to have a major role in regulating Akt signaling in hippocampal neurons while isoform 1 may promote Akt and PKC activation and inhibit ERK signaling. Akt regulates the balance between cell survival and apoptosis through a cascade that primarily alters the function of transcription factors that regulate pro- and antiapoptotic genes. Dephosphorylation of 'Ser-473' of Akt triggers apoptosis and suppression of tumor growth. Dephosphorylation of PRKCA and PRKCB leads to their destabilization and degradation. Dephosphorylates STK4 on 'Thr-387' leading to STK4 activation and apoptosis. Dephosphorylates RPS6KB1 and is involved in regulation of cap-dependent translation. Inhibits cancer cell proliferation and may act as a tumor suppressor. Dephosphorylates RAF1 inhibiting its kinase activity. May act as a negative regulator of K-Ras signaling in membrane rafts. Involved in the hippocampus-dependent long-term memory formation. Involved in circadian control by regulating the consolidation of circadian periodicity after resetting. Involved in development and function of regulatory T-cells. This chain is PH domain leucine-rich repeat protein phosphatase 1 (Phlpp1), found in Rattus norvegicus (Rat).